A 243-amino-acid chain; its full sequence is Retrotransposon Gag-like protein 6 (243 aa).

Residues 1–12 (MVQPRTSKTESP) are compositionally biased toward polar residues. The disordered stretch occupies residues 1–22 (MVQPRTSKTESPASAPGASAQM). A coiled-coil region spans residues 29-69 (LTSLRLTNSALRREASTLRAEKANLTNMLESVMAELTLLRT). Disordered stretches follow at residues 84–105 (SAITSNGTRPMTTPPTSLPEPF) and 218–243 (TGSCPVHPASNGTNPAPALPSRGRNL). Residues 85 to 94 (AITSNGTRPM) are compositionally biased toward polar residues.

It belongs to the LDOC1 family. In terms of tissue distribution, widely expressed.

The protein is Retrotransposon Gag-like protein 6 of Mus musculus (Mouse).